The sequence spans 283 residues: Tetraspanin-33 (283 aa).

The Cytoplasmic segment spans residues 1 to 24 (MARRPGVPAAYGDEFSFVSPLVKY). A helical transmembrane segment spans residues 25-45 (LLFFFNMLFWVISMVMVAVGV). Over 46-64 (YARLMKHAEAALACLAVDP) the chain is Extracellular. The helical transmembrane segment at 65–85 (AILLIVVGVLMFLLTFCGCIG) threads the bilayer. At 86-96 (SLRENICLLQT) the chain is on the cytoplasmic side. A helical membrane pass occupies residues 97 to 117 (FSLCLTIVFLLQLAAGILGFV). Residues 118–235 (FSDKARGKVS…DKLVNWIHSN (118 aa)) lie on the Extracellular side of the membrane. Intrachain disulfides connect C156–C224, C157–C189, C173–C183, and C190–C203. N172 carries N-linked (GlcNAc...) asparagine glycosylation. The helical transmembrane segment at 236 to 256 (LFLLGGVALGLAIPQLVGILL) threads the bilayer. At 257-283 (SQVLVNQIKDQIKLQLYNQQHRADPWY) the chain is on the cytoplasmic side.

The protein belongs to the tetraspanin (TM4SF) family. Homodimer; disulfide-linked. Interacts (via extracellular domain) with ADAM10 (via extracellular domain). Interacts (via cytoplasmic domain) with PLEKHA7 (via WW domains); the interaction is dependent on PDZD11 being bound to PLEKHA7 and facilitates the docking of ADAM10 to zonula adherens. Predominantly expressed in erythroblasts.

The protein resides in the cell membrane. The protein localises to the cell junction. It localises to the adherens junction. Its subcellular location is the cytoplasm. Part of TspanC8 subgroup, composed of 6 members that interact with the transmembrane metalloprotease ADAM10. This interaction is required for ADAM10 exit from the endoplasmic reticulum and for enzymatic maturation and trafficking to the cell surface as well as substrate specificity. Different TspanC8/ADAM10 complexes have distinct substrates. Plays an important role in normal erythropoiesis. It has a role in the differentiation of erythroid progenitors. Negatively regulates ligand-induced Notch activity probably by regulating ADAM10 activity. Mediates docking of ADAM10 to zonula adherens by interacting with ADAM10 and, in a PDZD11-dependent manner, with the zonula adherens protein PLEKHA7. The protein is Tetraspanin-33 (Tspan33) of Mus musculus (Mouse).